Consider the following 362-residue polypeptide: RING finger protein 32 (362 aa).

The RING-type 1; atypical zinc finger occupies 127–169 (CPICKEEFELRPQVLLSCSHVFHKACLQAFEKFTNKKTCPLCR). The 30-residue stretch at 186-215 (RIKCVTRIQAYWRGCVVRKWYRNLRKTVPP) folds into the IQ domain. The RING-type 2; atypical zinc-finger motif lies at 293-352 (CSICLAPLSAAGGQRVGAGRRSREMALLSCSHVFHHACLLALEEFSVGDRPPFHACPLCR).

In terms of tissue distribution, highly expressed in testis, less abundant in ovary.

The protein resides in the cytoplasm. May play a role in sperm formation. This is RING finger protein 32 (RNF32) from Homo sapiens (Human).